The following is a 1087-amino-acid chain: Synaptopodin-2 (1087 aa).

Residues 6 to 88 (FICISMTGGA…SLHLLVKRPS (83 aa)) form the PDZ domain. Disordered regions lie at residues 24–52 (GKEE…EGDE), 88–112 (SSGT…HEGP), and 207–272 (GPIV…AGLP). Basic and acidic residues predominate over residues 101-112 (TTNHQHLTHEGP). 2 stretches are compositionally biased toward polar residues: residues 207–230 (GPIV…SQLE) and 246–255 (TSLTSSTSSG). A phosphoserine mark is found at serine 300, serine 319, and serine 320. The tract at residues 320–359 (SEGTEHGEDQRSGKDQSRPHKHRARHARLRRSESLSEKQV) is disordered. Residues 322–337 (GTEHGEDQRSGKDQSR) show a composition bias toward basic and acidic residues. The residue at position 323 (threonine 323) is a Phosphothreonine. Residues 338–348 (PHKHRARHARL) show a composition bias toward basic residues. The span at 349-359 (RRSESLSEKQV) shows a compositional bias: basic and acidic residues. The Nuclear localization signal signature appears at 388–396 (KKRRRRARK). Phosphoserine is present on residues serine 540, serine 541, serine 543, and serine 546. Residues 551 to 557 (RSLASVP) are interaction with YWHAB. Position 555 is a phosphoserine; by PKA (serine 555). Disordered stretches follow at residues 581-817 (AKPF…ALNL) and 832-863 (NYTP…GMSG). Serine 596 bears the Phosphoserine mark. The interval 599 to 804 (RSVTSPISDF…AVSSIKIAQP (206 aa)) is interaction with YWHAB. At threonine 602 the chain carries Phosphothreonine; by PKA and CaMK2. The residue at position 603 (serine 603) is a Phosphoserine. 2 stretches are compositionally biased toward pro residues: residues 609-622 (PAPP…PPPE) and 636-647 (AQPPPWPQPAPW). The short motif at 611 to 614 (PPPY) is the PPPY motif element. A Phosphotyrosine modification is found at tyrosine 614. The residue at position 618 (serine 618) is a Phosphoserine. The tract at residues 656–796 (SEQIASRDER…PPNPPQVTAV (141 aa)) is F-actin binding. Residues 656 to 909 (SEQIASRDER…LPASWKYSSN (254 aa)) form an F-actin bundling activity region. Interaction with ACTN2 regions lie at residues 656-917 (SEQI…PPVA) and 894-1087 (QSPT…VVEE). Serine 697 and serine 719 each carry phosphoserine. Residues 740 to 893 (AKQKTPPPVA…DTVQAHTVRA (154 aa)) form an actin binding region. Threonine 744 carries the post-translational modification Phosphothreonine. Residues 751 to 777 (KPAVKSPSSSQPVAPVSPVWSPGVAPA) show a composition bias toward low complexity. A phosphoserine mark is found at serine 767 and serine 771. A compositionally biased stretch (polar residues) spans 781–797 (AFSTSNPPNPPQVTAVS). The segment at 803 to 1087 (QPAAPPARPA…QVWKPSVVEE (285 aa)) is interaction with FLNC. Serine 895, serine 899, and serine 903 each carry phosphoserine. Disordered stretches follow at residues 930–952 (AIKS…KKPL), 970–1012 (FTFQ…PTNA), and 1037–1060 (PVSA…STSY). Residues 993–1012 (PAMKQALPPRQANVGSPTNA) form an interaction with ZYX region. A phosphoserine mark is found at serine 1008 and serine 1050. Residues 1037–1051 (PVSASPVPVSVPTSP) show a composition bias toward low complexity.

The protein belongs to the synaptopodin family. As to quaternary structure, may self-associate in muscle cells under oxidative stress. Binds F-actin. Interacts with ACTN2; ACTN2 is proposed to anchor SYOP2 at Z lines in mature myocytes. Interacts with AKAP6, PPP3CA and CAMK2A. Interacts (phosphorylated form) with YWHAB; YWHAB competes with ACTN2 for interaction with SYNPO2. Interacts with KPNA2; mediating nuclear import of SYNOP2; dependent on interaction with YWHAB. Interacts with IPO13; may be implicated in SYNOP2 nuclear import. Interacts with ZYX, FLNC, ILK. Interacts with BAG3 (via WW 1 domain). May associate with the CASA complex consisting of HSPA8, HSPB8 and BAG3. Interacts with VPS18. Post-translationally, phosphorylated by PKA, and by CaMK2 at multiple sites. Dephosphorylated by calcineurin at Ser-555 and Thr-602; abrogating interaction with YWHAB and impairing nuclear import. In terms of tissue distribution, expressed in skeletal muscle, heart, colon, stomach, uterus and lung. Expression is restricted to muscle cell layers in colon, uterus and stomach.

It localises to the nucleus. It is found in the cytoplasm. Its subcellular location is the myofibril. The protein localises to the sarcomere. The protein resides in the z line. It localises to the cell junction. It is found in the focal adhesion. In terms of biological role, has an actin-binding and actin-bundling activity. Can induce the formation of F-actin networks. At the sarcomeric Z lines is proposed to act as adapter protein that links nascent myofibers to the sarcolemma via ZYX and may play a role in early assembly and stabilization of the Z lines. Involved in autophagosome formation. May play a role in chaperone-assisted selective autophagy (CASA) involved in Z lines maintenance in striated muscle under mechanical tension; may link the client-processing CASA chaperone machinery to a membrane-tethering and fusion complex providing autophagosome membranes. Involved in regulation of cell migration. May be a tumor suppressor. In Mus musculus (Mouse), this protein is Synaptopodin-2 (Synpo2).